Consider the following 195-residue polypeptide: PABIR family member 1 (195 aa).

The protein belongs to the FAM122 family.

The chain is PABIR family member 1 from Homo sapiens (Human).